Here is a 715-residue protein sequence, read N- to C-terminus: Fatty acid oxidation complex subunit alpha (715 aa).

Positions 1–190 (MTTTSAFMLN…KAGLVDDVVP (190 aa)) are enoyl-CoA hydratase. A 3-hydroxyacyl-CoA dehydrogenase region spans residues 306-715 (GPLNSVGILG…WTNGETDQGN (410 aa)).

It in the N-terminal section; belongs to the enoyl-CoA hydratase/isomerase family. This sequence in the central section; belongs to the 3-hydroxyacyl-CoA dehydrogenase family. Heterotetramer of two alpha chains (FadJ) and two beta chains (FadI).

It localises to the cytoplasm. It carries out the reaction a (3S)-3-hydroxyacyl-CoA = a (2E)-enoyl-CoA + H2O. The enzyme catalyses a 4-saturated-(3S)-3-hydroxyacyl-CoA = a (3E)-enoyl-CoA + H2O. The catalysed reaction is a (3S)-3-hydroxyacyl-CoA + NAD(+) = a 3-oxoacyl-CoA + NADH + H(+). It catalyses the reaction (3S)-3-hydroxybutanoyl-CoA = (3R)-3-hydroxybutanoyl-CoA. It participates in lipid metabolism; fatty acid beta-oxidation. Catalyzes the formation of a hydroxyacyl-CoA by addition of water on enoyl-CoA. Also exhibits 3-hydroxyacyl-CoA epimerase and 3-hydroxyacyl-CoA dehydrogenase activities. This chain is Fatty acid oxidation complex subunit alpha, found in Salmonella newport (strain SL254).